Here is a 967-residue protein sequence, read N- to C-terminus: Phosphoenolpyruvate carboxylase (967 aa).

Ser10 carries the phosphoserine modification. Residues His171 and Lys601 contribute to the active site. The tract at residues 915–936 (NASRLPLSRESPEATKPADELV) is disordered. Residues 924 to 933 (ESPEATKPAD) are compositionally biased toward basic and acidic residues.

The protein belongs to the PEPCase type 1 family. As to quaternary structure, homotetramer. Mg(2+) serves as cofactor.

The protein localises to the cytoplasm. It catalyses the reaction oxaloacetate + phosphate = phosphoenolpyruvate + hydrogencarbonate. With respect to regulation, by light-reversible phosphorylation. Through the carboxylation of phosphoenolpyruvate (PEP) it forms oxaloacetate, a four-carbon dicarboxylic acid source for the tricarboxylic acid cycle. The polypeptide is Phosphoenolpyruvate carboxylase (Pisum sativum (Garden pea)).